The chain runs to 721 residues: Choline O-acetyltransferase (721 aa).

Histidine 419 acts as the Proton acceptor in catalysis. Residues 496–508, serine 534, and glutamine 656 each bind CoA; that span reads GKTF…VSPD.

The protein belongs to the carnitine/choline acetyltransferase family. As to quaternary structure, the 54 kDa and 13 kDa chains exist as a heterodimer. Post-translationally, the N-terminus of choline O-acetyltransferase 67 kDa and 54 kDa chains are blocked.

The catalysed reaction is choline + acetyl-CoA = acetylcholine + CoA. Its function is as follows. Catalyzes the reversible synthesis of acetylcholine (ACh) from acetyl CoA and choline at cholinergic synapses. This Drosophila melanogaster (Fruit fly) protein is Choline O-acetyltransferase.